A 90-amino-acid polypeptide reads, in one-letter code: U7-theraphotoxin-Hhn1f (90 aa).

A signal peptide spans 1–19 (MKTAIFTVVLALAVFAVLS). The propeptide occupies 20-50 (FGWEANEKALSEEFTELIHEKEAASETEARG). Cystine bridges form between Cys51/Cys65, Cys58/Cys70, and Cys64/Cys81.

Belongs to the neurotoxin 10 (Hwtx-1) family. 13 (Hntx-13) subfamily. As to expression, expressed by the venom gland.

It is found in the secreted. Its function is as follows. Ion channel inhibitor. The chain is U7-theraphotoxin-Hhn1f from Cyriopagopus hainanus (Chinese bird spider).